The chain runs to 160 residues: SsrA-binding protein (160 aa).

It belongs to the SmpB family.

It localises to the cytoplasm. Functionally, required for rescue of stalled ribosomes mediated by trans-translation. Binds to transfer-messenger RNA (tmRNA), required for stable association of tmRNA with ribosomes. tmRNA and SmpB together mimic tRNA shape, replacing the anticodon stem-loop with SmpB. tmRNA is encoded by the ssrA gene; the 2 termini fold to resemble tRNA(Ala) and it encodes a 'tag peptide', a short internal open reading frame. During trans-translation Ala-aminoacylated tmRNA acts like a tRNA, entering the A-site of stalled ribosomes, displacing the stalled mRNA. The ribosome then switches to translate the ORF on the tmRNA; the nascent peptide is terminated with the 'tag peptide' encoded by the tmRNA and targeted for degradation. The ribosome is freed to recommence translation, which seems to be the essential function of trans-translation. The chain is SsrA-binding protein from Actinobacillus succinogenes (strain ATCC 55618 / DSM 22257 / CCUG 43843 / 130Z).